A 159-amino-acid polypeptide reads, in one-letter code: 2-C-methyl-D-erythritol 2,4-cyclodiphosphate synthase (159 aa).

A divalent metal cation contacts are provided by D10 and H12. Residues 10–12 and 36–37 each bind 4-CDP-2-C-methyl-D-erythritol 2-phosphate; these read DVH and HS. Position 44 (H44) interacts with a divalent metal cation. Residues 58-60, 63-67, 102-108, 134-137, F141, 141-144, and R144 contribute to the 4-CDP-2-C-methyl-D-erythritol 2-phosphate site; these read DIG, FPDTD, AQAPKMA, TTTE, and FTGR.

Belongs to the IspF family. As to quaternary structure, homotrimer. A divalent metal cation is required as a cofactor.

The catalysed reaction is 4-CDP-2-C-methyl-D-erythritol 2-phosphate = 2-C-methyl-D-erythritol 2,4-cyclic diphosphate + CMP. It functions in the pathway isoprenoid biosynthesis; isopentenyl diphosphate biosynthesis via DXP pathway; isopentenyl diphosphate from 1-deoxy-D-xylulose 5-phosphate: step 4/6. Involved in the biosynthesis of isopentenyl diphosphate (IPP) and dimethylallyl diphosphate (DMAPP), two major building blocks of isoprenoid compounds. Catalyzes the conversion of 4-diphosphocytidyl-2-C-methyl-D-erythritol 2-phosphate (CDP-ME2P) to 2-C-methyl-D-erythritol 2,4-cyclodiphosphate (ME-CPP) with a corresponding release of cytidine 5-monophosphate (CMP). This is 2-C-methyl-D-erythritol 2,4-cyclodiphosphate synthase from Shewanella oneidensis (strain ATCC 700550 / JCM 31522 / CIP 106686 / LMG 19005 / NCIMB 14063 / MR-1).